A 535-amino-acid polypeptide reads, in one-letter code: CTP synthase (535 aa).

Residues 300 to 535 (RIGIVGKYAP…LVSASYERSK (236 aa)) enclose the Glutamine amidotransferase type-1 domain. Catalysis depends on for GATase activity residues C385, H509, and E511.

The protein belongs to the CTP synthase family.

The enzyme catalyses UTP + L-glutamine + ATP + H2O = CTP + L-glutamate + ADP + phosphate + 2 H(+). It functions in the pathway pyrimidine metabolism; CTP biosynthesis via de novo pathway; CTP from UDP: step 2/2. Its function is as follows. Catalyzes the ATP-dependent amination of UTP to CTP with either L-glutamine or ammonia as the source of nitrogen. The protein is CTP synthase of Encephalitozoon cuniculi (strain GB-M1) (Microsporidian parasite).